Consider the following 270-residue polypeptide: Protein FAM110D (270 aa).

Positions 1–16 (MLLASPSTPSRGRTPS) are enriched in low complexity. 3 disordered regions span residues 1–83 (MLLA…RPDS), 117–142 (RDVA…PQDA), and 186–244 (PQSW…QVSV). Positions 68–78 (RPARRGSGRRL) are enriched in basic residues.

The protein belongs to the FAM110 family.

The chain is Protein FAM110D (FAM110D) from Bos taurus (Bovine).